Consider the following 210-residue polypeptide: N-(5'-phosphoribosyl)anthranilate isomerase (210 aa).

Belongs to the TrpF family.

The catalysed reaction is N-(5-phospho-beta-D-ribosyl)anthranilate = 1-(2-carboxyphenylamino)-1-deoxy-D-ribulose 5-phosphate. The protein operates within amino-acid biosynthesis; L-tryptophan biosynthesis; L-tryptophan from chorismate: step 3/5. This Staphylococcus aureus (strain MRSA252) protein is N-(5'-phosphoribosyl)anthranilate isomerase.